The sequence spans 473 residues: Fumarate hydratase class II (473 aa).

Substrate contacts are provided by residues 104 to 106, 128 to 131, 138 to 140, and Thr-186; these read SGT, HPND, and SSN. The active-site Proton donor/acceptor is the His-187. The active site involves Ser-318. Substrate is bound by residues Ser-319 and 324–326; that span reads KVN.

Belongs to the class-II fumarase/aspartase family. Fumarase subfamily. As to quaternary structure, homotetramer.

The protein resides in the cytoplasm. The catalysed reaction is (S)-malate = fumarate + H2O. Its pathway is carbohydrate metabolism; tricarboxylic acid cycle; (S)-malate from fumarate: step 1/1. Involved in the TCA cycle. Catalyzes the stereospecific interconversion of fumarate to L-malate. The protein is Fumarate hydratase class II of Corynebacterium glutamicum (strain ATCC 13032 / DSM 20300 / JCM 1318 / BCRC 11384 / CCUG 27702 / LMG 3730 / NBRC 12168 / NCIMB 10025 / NRRL B-2784 / 534).